We begin with the raw amino-acid sequence, 422 residues long: Protein IQ-DOMAIN 5 (422 aa).

A Nuclear localization signal motif is present at residues 23–30 (SKKDENVK). 3 consecutive IQ domains span residues 87–115 (ENRAATRIQTAYRGFLARRALRALKGLVR), 116–138 (LQALVRGHAVRKQAAVTLRCMQA), and 139–164 (LVRVQARVRARRVRLALELESETSQQ). Positions 137 to 151 (QALVRVQARVRARRV) are calmodulin-binding. Positions 269–422 (GENGMEQSEN…NSDPIKQRLA (154 aa)) are disordered. Residues 273 to 308 (MEQSENVPKTQIKSVSKMPNTSNLVSGVSSQMTGPC) show a composition bias toward polar residues. The segment covering 310–327 (SDGDSSSPGISSSIPVVS) has biased composition (low complexity). Basic and acidic residues predominate over residues 355–371 (NPKERSREPNRSSKERL). The span at 373–387 (LPNSGKSLGSQSTKA) shows a compositional bias: polar residues. A compositionally biased stretch (basic and acidic residues) spans 412–422 (RNSDPIKQRLA).

It belongs to the IQD family. As to quaternary structure, binds to multiple calmodulin (CaM) in the presence of Ca(2+) and CaM-like proteins. As to expression, expressed mostly in vegetative tissues including older parts of the root, cotyledons, leaves and shoot apical meristems (SAM). Present at low levels in pollen, siliques and seeds.

The protein resides in the nucleus. It localises to the cytoplasm. Its subcellular location is the cytoskeleton. The protein localises to the spindle. It is found in the phragmoplast. Functionally, may be involved in cooperative interactions with calmodulins or calmodulin-like proteins. Recruits calmodulin (CaM) calcium sensor proteins to cortical microtubule arrays, thus being a potential scaffold in cellular signaling and trafficking. Binds to microtubules (MTs) and promotes MT assembly and dynamics to modulate pavement cell (PC) morphogenesis via cellulose deposition-dependent anisotropic cell expansion triggered by cellulose synthase complexes (CSCs). May associate with nucleic acids and regulate gene expression at the transcriptional or post-transcriptional level. The sequence is that of Protein IQ-DOMAIN 5 from Arabidopsis thaliana (Mouse-ear cress).